The primary structure comprises 282 residues: Protein N-terminal and lysine N-methyltransferase efm7 (282 aa).

The span at 1–13 shows a compositional bias: basic and acidic residues; the sequence is MSKPEEVVNHVPE. The disordered stretch occupies residues 1–32; sequence MSKPEEVVNHVPEDEGSDIEAGGLFEDPPDFY. S-adenosyl-L-methionine contacts are provided by residues tryptophan 67, 93 to 95, aspartate 115, tryptophan 152, and alanine 179; that span reads GAA.

It belongs to the class I-like SAM-binding methyltransferase superfamily. EFM7 family.

Its subcellular location is the cytoplasm. Its function is as follows. S-adenosyl-L-methionine-dependent protein methyltransferase that trimethylates the N-terminal glycine 'Gly-2' of elongation factor 1-alpha, before also catalyzing the mono- and dimethylation of 'Lys-3'. The sequence is that of Protein N-terminal and lysine N-methyltransferase efm7 (nnt-1) from Neurospora crassa (strain ATCC 24698 / 74-OR23-1A / CBS 708.71 / DSM 1257 / FGSC 987).